The chain runs to 93 residues: Small ribosomal subunit protein uS19 (93 aa).

Belongs to the universal ribosomal protein uS19 family.

Protein S19 forms a complex with S13 that binds strongly to the 16S ribosomal RNA. This chain is Small ribosomal subunit protein uS19, found in Nitratidesulfovibrio vulgaris (strain ATCC 29579 / DSM 644 / CCUG 34227 / NCIMB 8303 / VKM B-1760 / Hildenborough) (Desulfovibrio vulgaris).